A 323-amino-acid chain; its full sequence is Transaldolase (323 aa).

Lys131 functions as the Schiff-base intermediate with substrate in the catalytic mechanism.

The protein belongs to the transaldolase family. Type 1 subfamily. In terms of assembly, homodimer.

It is found in the cytoplasm. It carries out the reaction D-sedoheptulose 7-phosphate + D-glyceraldehyde 3-phosphate = D-erythrose 4-phosphate + beta-D-fructose 6-phosphate. It participates in carbohydrate degradation; pentose phosphate pathway; D-glyceraldehyde 3-phosphate and beta-D-fructose 6-phosphate from D-ribose 5-phosphate and D-xylulose 5-phosphate (non-oxidative stage): step 2/3. Functionally, transaldolase is important for the balance of metabolites in the pentose-phosphate pathway. The chain is Transaldolase from Blochmanniella floridana.